A 556-amino-acid chain; its full sequence is MSVSAFNRRWAAVILEALTRHGVRHICIAPGSRSTPLTLAAAENSTFIHHTHFDERGLGHLALGLAKVSKQPVAVIVTSGTAVANLYPALIEAGLTGEKLILLTADRPPELIDCGANQAIRQPGMFASHPTHSISLPRPTQDIPARWLVSTIDHALGTLHVGGVHINCPFAEPLYGEMDDTGLSWQQRLGDWWQDDKPWLREAPRLESEKQRDWFFWRQKRGVVVAGRMSAEEGKKVALWAQTLGWPLIGDVLSQTGQPLPCADLWLGNAKATSELQQAQIVVQLGSSLTGKRLLQWQASCEPEEYWIVDDIEGRLDPAHHRGRRLIANIADWLELHPAEKRQPWCVEIPRLAEQAMQAVIARRDAFGEAQLAHRICDYLPEQGQLFVGNSLVVRLIDALSQLPAGYPVYSNRGASGIDGLLSTAAGVQRASGKPTLAIVGDLSALYDLNALALLRQVSAPLVLIVVNNNGGQIFSLLPTPQSERERFYLMPQNVHFEHAAAMFELKYHRPQNWQELETAFADAWRTPTTTVIEMVVNDTDGAQTLQQLLAQVSHL.

The protein belongs to the TPP enzyme family. MenD subfamily. In terms of assembly, homodimer. Mg(2+) is required as a cofactor. Mn(2+) serves as cofactor. It depends on thiamine diphosphate as a cofactor.

The catalysed reaction is isochorismate + 2-oxoglutarate + H(+) = 5-enolpyruvoyl-6-hydroxy-2-succinyl-cyclohex-3-ene-1-carboxylate + CO2. The protein operates within quinol/quinone metabolism; 1,4-dihydroxy-2-naphthoate biosynthesis; 1,4-dihydroxy-2-naphthoate from chorismate: step 2/7. Its pathway is quinol/quinone metabolism; menaquinone biosynthesis. Catalyzes the thiamine diphosphate-dependent decarboxylation of 2-oxoglutarate and the subsequent addition of the resulting succinic semialdehyde-thiamine pyrophosphate anion to isochorismate to yield 2-succinyl-5-enolpyruvyl-6-hydroxy-3-cyclohexene-1-carboxylate (SEPHCHC). This is 2-succinyl-5-enolpyruvyl-6-hydroxy-3-cyclohexene-1-carboxylate synthase from Escherichia coli O8 (strain IAI1).